Here is a 316-residue protein sequence, read N- to C-terminus: Cilia-and flagella-associated protein 96 (316 aa).

Residues 220 to 242 (EEKKEVSFKPFKPSSPGKKAGGM) form a disordered region. Positions 227–237 (FKPFKPSSPGK) are enriched in low complexity.

It belongs to the CFAP96 family.

The protein localises to the cytoplasm. It is found in the cytoskeleton. Its subcellular location is the microtubule organizing center. The protein resides in the centrosome. This is Cilia-and flagella-associated protein 96 (Cfap96) from Mus musculus (Mouse).